Here is a 117-residue protein sequence, read N- to C-terminus: Large ribosomal subunit protein bL20 (117 aa).

This sequence belongs to the bacterial ribosomal protein bL20 family.

Its function is as follows. Binds directly to 23S ribosomal RNA and is necessary for the in vitro assembly process of the 50S ribosomal subunit. It is not involved in the protein synthesizing functions of that subunit. This is Large ribosomal subunit protein bL20 from Mannheimia succiniciproducens (strain KCTC 0769BP / MBEL55E).